Here is a 152-residue protein sequence, read N- to C-terminus: Ribosomal RNA large subunit methyltransferase H (152 aa).

S-adenosyl-L-methionine is bound by residues L70, G102, and 120–125 (LSPMTF).

The protein belongs to the RNA methyltransferase RlmH family. In terms of assembly, homodimer.

The protein resides in the cytoplasm. It catalyses the reaction pseudouridine(1915) in 23S rRNA + S-adenosyl-L-methionine = N(3)-methylpseudouridine(1915) in 23S rRNA + S-adenosyl-L-homocysteine + H(+). Its function is as follows. Specifically methylates the pseudouridine at position 1915 (m3Psi1915) in 23S rRNA. This chain is Ribosomal RNA large subunit methyltransferase H, found in Pelobacter propionicus (strain DSM 2379 / NBRC 103807 / OttBd1).